The sequence spans 431 residues: Large envelope protein (431 aa).

Gly-2 carries the N-myristoyl glycine; by host lipid modification. Residues 2-148 (GNNIKVTFNP…PPLRDTHPHL (147 aa)) are pre-S1. Residues 2–207 (GNNIKVTFNP…PSTTGDPALS (206 aa)) form a pre-S region. The Virion surface; in external conformation segment spans residues 2 to 214 (GNNIKVTFNP…ALSPEMSPSS (213 aa)). The Intravirion; in internal conformation segment spans residues 2 to 286 (GNNIKVTFNP…NGFRWMYLRR (285 aa)). Asn-3 carries an N-linked (GlcNAc...) asparagine glycan. The segment at 115-147 (IPRGLVPPQTPTNRDQGRKPTPPTPPLRDTHPH) is disordered. The segment at 149 to 207 (TMKNQTFHLQGFVDGLRDLTTTERQHNAYRDPFTTLSPAVPTVSTILSPPSTTGDPALS) is pre-S2. Residues 215–235 (LLGLLAGLQVVYFLWTKILTI) traverse the membrane as a helical segment. Residues 236–286 (AQNLDWWCTSLSFPGGIPECTGQNSQFQTCKHLPTSCPPTCNGFRWMYLRR) are Intravirion; in external conformation-facing. A helical membrane pass occupies residues 287–307 (FIIYLLVLLLCLIFLLVLLDW). At 308–379 (KGLIPVCPLQ…WALARLSWLN (72 aa)) the chain is on the virion surface side. Asn-351 carries an N-linked (GlcNAc...) asparagine; by host glycan. The chain crosses the membrane as a helical span at residues 380 to 400 (LLVPLLQWLGGISLIAWFLLI). At 401 to 406 (WMIWFW) the chain is on the intravirion side. Residues 407 to 429 (GPALLSILPPFIPIFVLFFLIWV) traverse the membrane as a helical segment. Over 430-431 (YI) the chain is Virion surface.

Belongs to the orthohepadnavirus major surface antigen family. In terms of assembly, in its internal form (Li-HBsAg), interacts with the capsid protein and with the isoform S. Interacts with host chaperone CANX. Associates with host chaperone CANX through its pre-S2 N glycan; this association may be essential for isoform M proper secretion. As to quaternary structure, interacts with isoform L. Interacts with the antigens of satellite virus HDV (HDVAgs); this interaction is required for encapsidation of HDV genomic RNA. Isoform M is N-terminally acetylated by host at a ratio of 90%, and N-glycosylated by host at the pre-S2 region. Post-translationally, myristoylated.

It localises to the virion membrane. In terms of biological role, the large envelope protein exists in two topological conformations, one which is termed 'external' or Le-HBsAg and the other 'internal' or Li-HBsAg. In its external conformation the protein attaches the virus to cell receptors and thereby initiating infection. This interaction determines the species specificity and liver tropism. This attachment induces virion internalization predominantly through caveolin-mediated endocytosis. The large envelope protein also assures fusion between virion membrane and endosomal membrane. In its internal conformation the protein plays a role in virion morphogenesis and mediates the contact with the nucleocapsid like a matrix protein. The middle envelope protein plays an important role in the budding of the virion. It is involved in the induction of budding in a nucleocapsid independent way. In this process the majority of envelope proteins bud to form subviral lipoprotein particles of 22 nm of diameter that do not contain a nucleocapsid. This Marmota monax (Woodchuck) protein is Large envelope protein.